Consider the following 32-residue polypeptide: U13-ctenitoxin-Pn1a (32 aa).

Cystine bridges form between Cys3/Cys17, Cys10/Cys21, and Cys16/Cys30.

Expressed by the venom gland.

The protein resides in the secreted. Functionally, acts as a neurotoxin. The chain is U13-ctenitoxin-Pn1a from Phoneutria nigriventer (Brazilian armed spider).